We begin with the raw amino-acid sequence, 294 residues long: Acetylglutamate kinase (294 aa).

Residues glycine 69–glycine 70, arginine 91, and asparagine 190 contribute to the substrate site.

It belongs to the acetylglutamate kinase family. ArgB subfamily.

The protein localises to the cytoplasm. The catalysed reaction is N-acetyl-L-glutamate + ATP = N-acetyl-L-glutamyl 5-phosphate + ADP. It functions in the pathway amino-acid biosynthesis; L-arginine biosynthesis; N(2)-acetyl-L-ornithine from L-glutamate: step 2/4. Its function is as follows. Catalyzes the ATP-dependent phosphorylation of N-acetyl-L-glutamate. The protein is Acetylglutamate kinase of Mycobacterium tuberculosis (strain CDC 1551 / Oshkosh).